The sequence spans 303 residues: Aspartate carbamoyltransferase catalytic subunit (303 aa).

Residues Arg49 and Thr50 each coordinate carbamoyl phosphate. Position 77 (Lys77) interacts with L-aspartate. Positions 99, 126, and 129 each coordinate carbamoyl phosphate. Arg159 and Arg211 together coordinate L-aspartate. The carbamoyl phosphate site is built by Ser252 and Pro253.

This sequence belongs to the aspartate/ornithine carbamoyltransferase superfamily. ATCase family. In terms of assembly, heterododecamer (2C3:3R2) of six catalytic PyrB chains organized as two trimers (C3), and six regulatory PyrI chains organized as three dimers (R2).

The enzyme catalyses carbamoyl phosphate + L-aspartate = N-carbamoyl-L-aspartate + phosphate + H(+). The protein operates within pyrimidine metabolism; UMP biosynthesis via de novo pathway; (S)-dihydroorotate from bicarbonate: step 2/3. Functionally, catalyzes the condensation of carbamoyl phosphate and aspartate to form carbamoyl aspartate and inorganic phosphate, the committed step in the de novo pyrimidine nucleotide biosynthesis pathway. The chain is Aspartate carbamoyltransferase catalytic subunit from Listeria monocytogenes serotype 4b (strain F2365).